The primary structure comprises 301 residues: D-alanine--D-alanine ligase (301 aa).

Residues 99–294 enclose the ATP-grasp domain; the sequence is KSVLEANGIR…FSELIDMIIQ (196 aa). 126 to 181 contributes to the ATP binding site; it reads INELGYPVVVKPTHGGSSVATFIVKEEKEIENCVSEAFKWDSEVMIEKFIKGDEIT. Mg(2+) contacts are provided by Asp248, Glu261, and Asn263.

This sequence belongs to the D-alanine--D-alanine ligase family. The cofactor is Mg(2+). Mn(2+) serves as cofactor.

It is found in the cytoplasm. It carries out the reaction 2 D-alanine + ATP = D-alanyl-D-alanine + ADP + phosphate + H(+). It functions in the pathway cell wall biogenesis; peptidoglycan biosynthesis. Cell wall formation. The protein is D-alanine--D-alanine ligase of Clostridium beijerinckii (strain ATCC 51743 / NCIMB 8052) (Clostridium acetobutylicum).